We begin with the raw amino-acid sequence, 137 residues long: Large-conductance mechanosensitive channel (137 aa).

Topologically, residues 1–16 are cytoplasmic; that stretch reads MSIIKEFREFAMRGNV. A helical membrane pass occupies residues 17–45; sequence VDLAVGVIIGALFGKIVSSLVSDIIMPPL. Over 46 to 74 the chain is Periplasmic; the sequence is GLLIGGVDFKQFALFLRNAQGGIPAVVMN. Residues 75-94 form a helical membrane-spanning segment; that stretch reads YGAFIQNIFDFIIVAFAIFI. Topologically, residues 95 to 137 are cytoplasmic; the sequence is AIKLMNKMRCKQEDTPAAPPKPSAEEKLLAEIRDLLKEQQTRQ.

Belongs to the MscL family. In terms of assembly, homopentamer.

It localises to the cell inner membrane. Its function is as follows. Channel that opens in response to stretch forces in the membrane lipid bilayer. Forms a nonselective ion channel with a conductance of about 4 nanosiemens. May participate in the regulation of osmotic pressure changes within the cell. The chain is Large-conductance mechanosensitive channel from Pectobacterium carotovorum (Erwinia carotovora).